The following is a 199-amino-acid chain: Early activation antigen CD69 (199 aa).

A disordered region spans residues 1 to 29 (MSSENCFVAENSSLHPESGQENDATSPHF). The Cytoplasmic segment spans residues 1 to 40 (MSSENCFVAENSSLHPESGQENDATSPHFSTRHEGSFQVP). The helical; Signal-anchor for type II membrane protein transmembrane segment at 41 to 61 (VLCAVMNVVFITILIIALIAL) threads the bilayer. The Extracellular segment spans residues 62–199 (SVGQYNCPGQ…LYWICNKPYK (138 aa)). Intrachain disulfides connect Cys-85–Cys-96, Cys-113–Cys-194, and Cys-173–Cys-186. Residues 92 to 195 (YQRKCYFIST…CEKNLYWICN (104 aa)) form the C-type lectin domain. A glycan (N-linked (GlcNAc...) asparagine) is linked at Asn-166.

Homodimer; disulfide-linked. Interacts with S100A8 and S100A9. Interacts with galactin-1/LGALS1. Interacts with S1PR1; this interaction mediates S1PR1 degradation. Constitutive Ser/Thr phosphorylation in both mature thymocytes and activated T-lymphocytes. In terms of tissue distribution, expressed on the surface of activated T-cells, B-cells, natural killer cells, neutrophils, eosinophils, epidermal Langerhans cells and platelets.

It localises to the cell membrane. Functionally, transmembrane protein expressed mainly on T-cells resident in mucosa that plays an essential role in immune cell homeostasis. Rapidly expressed on the surface of platelets, T-lymphocytes and NK cells upon activation by various stimuli, such as antigen recognition or cytokine signaling, stimulates different signaling pathways in different cell types. Negatively regulates Th17 cell differentiation through its carbohydrate dependent interaction with galectin-1/LGALS1 present on immature dendritic cells. Association of CD69 cytoplasmic tail with the JAK3/STAT5 signaling pathway regulates the transcription of RORgamma/RORC and, consequently, differentiation toward the Th17 lineage. Also acts via the S100A8/S100A9 complex present on peripheral blood mononuclear cells to promote the conversion of naive CD4 T-cells into regulatory T-cells. Acts as an oxidized low-density lipoprotein (oxLDL) receptor in CD4 T-lymphocytes and negatively regulates the inflammatory response by inducing the expression of PDCD1 through the activation of NFAT. Participates in adipose tissue-derived mesenchymal stem cells (ASCs)-mediated protection against P.aeruginosa infection. Mechanistically, specifically recognizes P.aeruginosa to promote ERK1 activation, followed by granulocyte-macrophage colony-stimulating factor (GM-CSF) and other inflammatory cytokines secretion. In eosinophils, induces IL-10 production through the ERK1/2 pathway. Negatively regulates the chemotactic responses of effector lymphocytes and dendritic cells (DCs) to sphingosine 1 phosphate/S1P by acting as a S1PR1 receptor agonist and facilitating the internalization and degradation of the receptor. The polypeptide is Early activation antigen CD69 (CD69) (Homo sapiens (Human)).